The sequence spans 105 residues: Nucleoid-associated protein OCAR_7544/OCA5_c05960 (105 aa).

This sequence belongs to the YbaB/EbfC family. As to quaternary structure, homodimer.

It localises to the cytoplasm. The protein localises to the nucleoid. In terms of biological role, binds to DNA and alters its conformation. May be involved in regulation of gene expression, nucleoid organization and DNA protection. This is Nucleoid-associated protein OCAR_7544/OCA5_c05960 from Afipia carboxidovorans (strain ATCC 49405 / DSM 1227 / KCTC 32145 / OM5) (Oligotropha carboxidovorans).